A 260-amino-acid polypeptide reads, in one-letter code: Proteasome subunit alpha (260 aa).

The protein belongs to the peptidase T1A family. The 20S proteasome core is composed of 14 alpha and 14 beta subunits that assemble into four stacked heptameric rings, resulting in a barrel-shaped structure. The two inner rings, each composed of seven catalytic beta subunits, are sandwiched by two outer rings, each composed of seven alpha subunits. The catalytic chamber with the active sites is on the inside of the barrel. Has a gated structure, the ends of the cylinder being occluded by the N-termini of the alpha-subunits. Is capped at one or both ends by the proteasome regulatory ATPase, PAN.

The protein localises to the cytoplasm. With respect to regulation, the formation of the proteasomal ATPase PAN-20S proteasome complex, via the docking of the C-termini of PAN into the intersubunit pockets in the alpha-rings, triggers opening of the gate for substrate entry. Interconversion between the open-gate and close-gate conformations leads to a dynamic regulation of the 20S proteasome proteolysis activity. Component of the proteasome core, a large protease complex with broad specificity involved in protein degradation. The chain is Proteasome subunit alpha from Thermococcus kodakarensis (strain ATCC BAA-918 / JCM 12380 / KOD1) (Pyrococcus kodakaraensis (strain KOD1)).